We begin with the raw amino-acid sequence, 156 residues long: Arginine repressor (156 aa).

The protein belongs to the ArgR family.

The protein localises to the cytoplasm. It participates in amino-acid biosynthesis; L-arginine biosynthesis [regulation]. In terms of biological role, regulates arginine biosynthesis genes. In Proteus mirabilis (strain HI4320), this protein is Arginine repressor.